A 49-amino-acid polypeptide reads, in one-letter code: uncharacterized protein (49 aa).

It belongs to the ELIP/psbS family.

The protein resides in the plastid. It is found in the cyanelle. Possible role in chlorophyll and/or carotenoid binding. This is an uncharacterized protein from Cyanophora paradoxa.